We begin with the raw amino-acid sequence, 383 residues long: Na(+)/H(+) antiporter NhaA (383 aa).

11 helical membrane passes run 10–30 (LIGG…NNSP), 56–76 (LMHW…GLEI), 91–111 (IITP…IYLS), 121–141 (GWAI…ALLG), 150–170 (LLVI…IAIF), 174–194 (SLSL…IICN), 206–226 (VVLG…ATLA), 254–274 (PWII…ISFS), 289–308 (IIWG…LAVF), 327–347 (GISL…VLAF), and 355–375 (AIKI…YIVL).

Belongs to the NhaA Na(+)/H(+) (TC 2.A.33) antiporter family.

The protein resides in the cell inner membrane. The catalysed reaction is Na(+)(in) + 2 H(+)(out) = Na(+)(out) + 2 H(+)(in). In terms of biological role, na(+)/H(+) antiporter that extrudes sodium in exchange for external protons. The polypeptide is Na(+)/H(+) antiporter NhaA (Francisella tularensis subsp. mediasiatica (strain FSC147)).